Here is a 101-residue protein sequence, read N- to C-terminus: Small ribosomal subunit protein uS10 (101 aa).

This sequence belongs to the universal ribosomal protein uS10 family. As to quaternary structure, part of the 30S ribosomal subunit.

Functionally, involved in the binding of tRNA to the ribosomes. This is Small ribosomal subunit protein uS10 from Amoebophilus asiaticus (strain 5a2).